The primary structure comprises 424 residues: MTNKKAFKEACKFIAGGVNSPVRAFANVQSEPKFISHGKGAYIFDIDGNSYIDYVQSWGPLLFGHCDKDIQKACQKALHKGSSFGAPTLLETELAKLVLSDFPHLEKIRFVSSGTEATMSAIRLARGFTKKDKILKFEGCYHGHSDSLLVSAGSGAATFNSPSSLGVLEDVAKHTLVAKYNDINSVKELFEKNKDIACVIIEPIAGNMGLVPAKQDFLEELAKICKNNQTLLIFDEVMSGYRASYLGSYGINHIQADIITFGKVIGGGLPAAAFASRAEIMDILSPLGGVYQAGTLSGNPLAMAAGIASLTKAKKKTKLYDKLGKLAKKLTQGMKKLADEKGLPLQACHVGSMFGYFFTKDPVSNYQDALKSDLALFSKFHKNMLENGIYLAPSQFETGFICSKMDDKIIDTTLEAVRESFKRI.

Lysine 263 bears the N6-(pyridoxal phosphate)lysine mark.

Belongs to the class-III pyridoxal-phosphate-dependent aminotransferase family. HemL subfamily. In terms of assembly, homodimer. It depends on pyridoxal 5'-phosphate as a cofactor.

It localises to the cytoplasm. The catalysed reaction is (S)-4-amino-5-oxopentanoate = 5-aminolevulinate. The protein operates within porphyrin-containing compound metabolism; protoporphyrin-IX biosynthesis; 5-aminolevulinate from L-glutamyl-tRNA(Glu): step 2/2. This is Glutamate-1-semialdehyde 2,1-aminomutase from Campylobacter jejuni subsp. jejuni serotype O:6 (strain 81116 / NCTC 11828).